Consider the following 135-residue polypeptide: Probable transcription factor At2g20613 (135 aa).

The tract at residues 1–104 is disordered; it reads MSHKRFNPLT…KRGGGGGEEA (104 aa). Acidic residues predominate over residues 28–41; that stretch reads DSSSDEETDSDSDS. Residues 62 to 80 are compositionally biased toward basic and acidic residues; that stretch reads KSVKISEKSVAKRSRETHE.

This sequence belongs to the GeBP family.

The polypeptide is Probable transcription factor At2g20613 (Arabidopsis thaliana (Mouse-ear cress)).